Consider the following 458-residue polypeptide: tRNA-2-methylthio-N(6)-dimethylallyladenosine synthase (458 aa).

The MTTase N-terminal domain maps to 15–134 (KKVFIKTYGC…LPELLEKAKQ (120 aa)). Positions 24, 60, 97, 175, 179, and 182 each coordinate [4Fe-4S] cluster. One can recognise a Radical SAM core domain in the interval 161–395 (RKRGVSAFLT…LLLEQQNTFL (235 aa)). In terms of domain architecture, TRAM spans 396–457 (RSKIGQKTDV…SNSFVGEMTN (62 aa)).

The protein belongs to the methylthiotransferase family. MiaB subfamily. In terms of assembly, monomer. It depends on [4Fe-4S] cluster as a cofactor.

It is found in the cytoplasm. The catalysed reaction is N(6)-dimethylallyladenosine(37) in tRNA + (sulfur carrier)-SH + AH2 + 2 S-adenosyl-L-methionine = 2-methylsulfanyl-N(6)-dimethylallyladenosine(37) in tRNA + (sulfur carrier)-H + 5'-deoxyadenosine + L-methionine + A + S-adenosyl-L-homocysteine + 2 H(+). Catalyzes the methylthiolation of N6-(dimethylallyl)adenosine (i(6)A), leading to the formation of 2-methylthio-N6-(dimethylallyl)adenosine (ms(2)i(6)A) at position 37 in tRNAs that read codons beginning with uridine. The sequence is that of tRNA-2-methylthio-N(6)-dimethylallyladenosine synthase from Bartonella tribocorum (strain CIP 105476 / IBS 506).